Consider the following 168-residue polypeptide: MTTDTHTLHIEEILDLLPHRFPFLLVDRVLDFEEGKFLRAVKNVSFNEPFFQGHFPGKPIFPGVLILEAMAQATGILAFKSRGKLEPGELYYFAGIDEARFKRPVVPGDQMIMEVEFVKERRGLTRFTGVAKVDGEIVCTATMMCARSKPATAVVTKSEVTKPDVKES.

His-54 is a catalytic residue.

Belongs to the thioester dehydratase family. FabZ subfamily.

The protein resides in the cytoplasm. It carries out the reaction a (3R)-hydroxyacyl-[ACP] = a (2E)-enoyl-[ACP] + H2O. Involved in unsaturated fatty acids biosynthesis. Catalyzes the dehydration of short chain beta-hydroxyacyl-ACPs and long chain saturated and unsaturated beta-hydroxyacyl-ACPs. The polypeptide is 3-hydroxyacyl-[acyl-carrier-protein] dehydratase FabZ (Yersinia enterocolitica serotype O:8 / biotype 1B (strain NCTC 13174 / 8081)).